A 156-amino-acid chain; its full sequence is Ecotin (156 aa).

Residues 1 to 19 (MKALLIAAGVAALSSTAMA) form the signal peptide. Cys-65 and Cys-102 are joined by a disulfide.

This sequence belongs to the protease inhibitor I11 (ecotin) family. Homodimer.

It localises to the periplasm. In terms of biological role, general inhibitor of family S1 serine proteases. The sequence is that of Ecotin from Pseudomonas aeruginosa (strain LESB58).